Consider the following 428-residue polypeptide: CinA-like protein (428 aa).

It belongs to the CinA family.

This chain is CinA-like protein, found in Gemmatimonas aurantiaca (strain DSM 14586 / JCM 11422 / NBRC 100505 / T-27).